A 1178-amino-acid polypeptide reads, in one-letter code: Integrin alpha-2 (1178 aa).

A signal peptide spans 1–26 (MGPGQAGGALLLRLLMLVQGILNCLA). Residues 27–1129 (YNVGLPGAKI…KPTEKAEVPT (1103 aa)) are Extracellular-facing. 2 FG-GAP repeats span residues 31-89 (LPGA…TATC) and 98-158 (ASIS…FLTS). Cys80 and Cys89 form a disulfide bridge. N-linked (GlcNAc...) asparagine glycans are attached at residues Asn102 and Asn109. A VWFA domain is found at 185-362 (WEAVKNFLVK…TLGEQIFSIE (178 aa)). 5 FG-GAP repeats span residues 363 to 417 (GTVQ…VIFP), 420 to 472 (AFDQ…KQGN), 474 to 536 (TVIQ…ILNQ), 537 to 595 (HQFL…TIRT), and 601 to 661 (ILGS…FTPD). N-linked (GlcNAc...) asparagine glycosylation is found at Asn429, Asn457, and Asn472. Positions 480–482 (RGD) match the Cell attachment site motif. 12 residues coordinate Ca(2+): Asp496, Asp498, Asp500, Asp504, Asp560, Asn562, Asp564, Asp568, Asp624, Asn626, Asp628, and Asp632. 5 disulfides stabilise this stretch: Cys677–Cys734, Cys786–Cys792, Cys862–Cys873, Cys1016–Cys1047, and Cys1052–Cys1057. The N-linked (GlcNAc...) asparagine glycan is linked to Asn696. N-linked (GlcNAc...) asparagine glycosylation is found at Asn1054, Asn1071, and Asn1078. Residues 1130 to 1151 (GVIIGSIIAGILLLLAMTAGLW) form a helical membrane-spanning segment. At 1152–1178 (KLGFFKRQYKKMGQNPDEMDETTELNS) the chain is on the cytoplasmic side. Positions 1154 to 1158 (GFFKR) match the GFFKR motif motif.

This sequence belongs to the integrin alpha chain family. In terms of assembly, heterodimer of an alpha and a beta subunit. Alpha-2 associates with beta-1. Interacts with HPS5 and RAB21.

The protein resides in the membrane. Functionally, integrin alpha-2/beta-1 is a collagen receptor, being responsible for adhesion of platelets and other cells to collagens, modulation of collagen and collagenase gene expression, force generation and organization of newly synthesized extracellular matrix. It is also a receptor for laminins, collagen C-propeptides and E-cadherin. Mice homozygous for a null mutation in the alpha-2 die very early in embryogenesis. In Mus musculus (Mouse), this protein is Integrin alpha-2 (Itga2).